The primary structure comprises 141 residues: Large ribosomal subunit protein uL22 (141 aa).

Residues 108–141 are disordered; that stretch reads KSEEKKTVAKKTTTTKAPAKKTTSTKKATVKKES. Residues 117 to 134 show a composition bias toward low complexity; the sequence is KKTTTTKAPAKKTTSTKK.

This sequence belongs to the universal ribosomal protein uL22 family. Part of the 50S ribosomal subunit.

Functionally, this protein binds specifically to 23S rRNA; its binding is stimulated by other ribosomal proteins, e.g. L4, L17, and L20. It is important during the early stages of 50S assembly. It makes multiple contacts with different domains of the 23S rRNA in the assembled 50S subunit and ribosome. In terms of biological role, the globular domain of the protein is located near the polypeptide exit tunnel on the outside of the subunit, while an extended beta-hairpin is found that lines the wall of the exit tunnel in the center of the 70S ribosome. This is Large ribosomal subunit protein uL22 from Campylobacter jejuni subsp. jejuni serotype O:2 (strain ATCC 700819 / NCTC 11168).